The primary structure comprises 154 residues: 6,7-dimethyl-8-ribityllumazine synthase (154 aa).

5-amino-6-(D-ribitylamino)uracil contacts are provided by residues phenylalanine 22, 56–58, and 80–82; these read AFE and AVI. A (2S)-2-hydroxy-3-oxobutyl phosphate-binding site is contributed by 85 to 86; it reads AT. Histidine 88 acts as the Proton donor in catalysis. Position 113 (phenylalanine 113) interacts with 5-amino-6-(D-ribitylamino)uracil. A (2S)-2-hydroxy-3-oxobutyl phosphate-binding site is contributed by arginine 127.

Belongs to the DMRL synthase family.

The enzyme catalyses (2S)-2-hydroxy-3-oxobutyl phosphate + 5-amino-6-(D-ribitylamino)uracil = 6,7-dimethyl-8-(1-D-ribityl)lumazine + phosphate + 2 H2O + H(+). It participates in cofactor biosynthesis; riboflavin biosynthesis; riboflavin from 2-hydroxy-3-oxobutyl phosphate and 5-amino-6-(D-ribitylamino)uracil: step 1/2. In terms of biological role, catalyzes the formation of 6,7-dimethyl-8-ribityllumazine by condensation of 5-amino-6-(D-ribitylamino)uracil with 3,4-dihydroxy-2-butanone 4-phosphate. This is the penultimate step in the biosynthesis of riboflavin. The sequence is that of 6,7-dimethyl-8-ribityllumazine synthase from Desulfitobacterium hafniense (strain DSM 10664 / DCB-2).